The sequence spans 581 residues: DNA primase (581 aa).

The segment at 40 to 64 (CPFHNEKTPSFTVNGEKQFYHCFGC) adopts a CHC2-type zinc-finger fold. The Toprim domain occupies 259 to 341 (QRLLVVEGYM…GRQVRFMFLP (83 aa)). Residues glutamate 265, aspartate 309, and aspartate 311 each coordinate Mg(2+).

The protein belongs to the DnaG primase family. As to quaternary structure, monomer. Interacts with DnaB. Zn(2+) is required as a cofactor. The cofactor is Mg(2+).

It carries out the reaction ssDNA + n NTP = ssDNA/pppN(pN)n-1 hybrid + (n-1) diphosphate.. Functionally, RNA polymerase that catalyzes the synthesis of short RNA molecules used as primers for DNA polymerase during DNA replication. The protein is DNA primase of Salmonella typhimurium (strain LT2 / SGSC1412 / ATCC 700720).